Consider the following 361-residue polypeptide: Histidinol-phosphate aminotransferase (361 aa).

K219 is subject to N6-(pyridoxal phosphate)lysine.

This sequence belongs to the class-II pyridoxal-phosphate-dependent aminotransferase family. Histidinol-phosphate aminotransferase subfamily. In terms of assembly, homodimer. The cofactor is pyridoxal 5'-phosphate.

It catalyses the reaction L-histidinol phosphate + 2-oxoglutarate = 3-(imidazol-4-yl)-2-oxopropyl phosphate + L-glutamate. The protein operates within amino-acid biosynthesis; L-histidine biosynthesis; L-histidine from 5-phospho-alpha-D-ribose 1-diphosphate: step 7/9. This chain is Histidinol-phosphate aminotransferase, found in Acinetobacter baumannii (strain ACICU).